The sequence spans 283 residues: MNPYVEIIRPGNVIMAIIAVILVAILAKSVDIPIILAMLAVFFAMSAGNVINDYFDYKIDLINKPQRPIPSGRISLDNAKNYAYLLFILAAIVGFLISCLVDTWIPCTIVIFSDIILYLYAYKLKSTPLIGNLTVGFMTGLCFIFAGYTFNEGLIIYESYLLAFFALIMTTAREITKDIEDMEGDMAEGAKTFPILYGPKISAIIAISLIIIDCALCPLLYIYHIFNINYLIVVSIAVLIFLYGAVLLRNQDSKTANKVSKYLKTGMLIAFIAFAIGTFTITF.

A run of 8 helical transmembrane segments spans residues 5–27, 37–57, 85–105, 128–148, 152–172, 203–223, 228–248, and 263–283; these read VEII…AILA, AMLA…YFDY, LLFI…DTWI, PLIG…FAGY, EGLI…MTTA, AIIA…LYIY, INYL…AVLL, and LKTG…TITF.

The protein belongs to the UbiA prenyltransferase family. DGGGP synthase subfamily. Requires Mg(2+) as cofactor.

The protein localises to the cell membrane. It carries out the reaction sn-3-O-(geranylgeranyl)glycerol 1-phosphate + (2E,6E,10E)-geranylgeranyl diphosphate = 2,3-bis-O-(geranylgeranyl)-sn-glycerol 1-phosphate + diphosphate. Its pathway is membrane lipid metabolism; glycerophospholipid metabolism. Functionally, prenyltransferase that catalyzes the transfer of the geranylgeranyl moiety of geranylgeranyl diphosphate (GGPP) to the C2 hydroxyl of (S)-3-O-geranylgeranylglyceryl phosphate (GGGP). This reaction is the second ether-bond-formation step in the biosynthesis of archaeal membrane lipids. The polypeptide is Digeranylgeranylglyceryl phosphate synthase (Methanobrevibacter smithii (strain ATCC 35061 / DSM 861 / OCM 144 / PS)).